The following is a 251-amino-acid chain: Adapter protein MecA (251 aa).

It belongs to the MecA family. As to quaternary structure, homodimer.

Enables the recognition and targeting of unfolded and aggregated proteins to the ClpC protease or to other proteins involved in proteolysis. The polypeptide is Adapter protein MecA (Streptococcus agalactiae serotype III (strain NEM316)).